The chain runs to 197 residues: Pyridoxal 5'-phosphate synthase subunit PdxT (197 aa).

Glycine 53–serine 55 lines the L-glutamine pocket. The active-site Nucleophile is cysteine 85. L-glutamine is bound by residues arginine 114 and isoleucine 142–arginine 143. Active-site charge relay system residues include histidine 179 and glutamate 181.

Belongs to the glutaminase PdxT/SNO family. In terms of assembly, in the presence of PdxS, forms a dodecamer of heterodimers. Only shows activity in the heterodimer.

It carries out the reaction aldehydo-D-ribose 5-phosphate + D-glyceraldehyde 3-phosphate + L-glutamine = pyridoxal 5'-phosphate + L-glutamate + phosphate + 3 H2O + H(+). The enzyme catalyses L-glutamine + H2O = L-glutamate + NH4(+). Its pathway is cofactor biosynthesis; pyridoxal 5'-phosphate biosynthesis. In terms of biological role, catalyzes the hydrolysis of glutamine to glutamate and ammonia as part of the biosynthesis of pyridoxal 5'-phosphate. The resulting ammonia molecule is channeled to the active site of PdxS. In Thermococcus onnurineus (strain NA1), this protein is Pyridoxal 5'-phosphate synthase subunit PdxT.